Consider the following 842-residue polypeptide: MAVRPGLWPALLGIVLAAWLRGSGAQQSATVANPVPGANPDLLPHFLVEPEDVYIVKNKPVLLVCKAVPATQIFFKCNGEWVRQVDHVIERSTDGSSGLPTMEVRINVSRQQVEKVFGLEEYWCQCVAWSSSGTTKSQKAYIRIAYLRKNFEQEPLAKEVSLEQGIVLPCRPPEGIPPAEVEWLRNEDLVDPSLDPNVYITREHSLVVRQARLADTANYTCVAKNIVARRRSASAAVIVYVDGSWSPWSKWSACGLDCTHWRSRECSDPAPRNGGEECQGTDLDTRNCTSDLCVHTASGPEDVALYVGLIAVAVCLVLLLLVLILVYCRKKEGLDSDVADSSILTSGFQPVSIKPSKADNPHLLTIQPDLSTTTTTYQGSLCPRQDGPSPKFQLTNGHLLSPLGGGRHTLHHSSPTSEAEEFVSRLSTQNYFRSLPRGTSNMTYGTFNFLGGRLMIPNTGISLLIPPDAIPRGKIYEIYLTLHKPEDVRLPLAGCQTLLSPIVSCGPPGVLLTRPVILAMDHCGEPSPDSWSLRLKKQSCEGSWEDVLHLGEEAPSHLYYCQLEASACYVFTEQLGRFALVGEALSVAAAKRLKLLLFAPVACTSLEYNIRVYCLHDTHDALKEVVQLEKQLGGQLIQEPRVLHFKDSYHNLRLSIHDVPSSLWKSKLLVSYQEIPFYHIWNGTQRYLHCTFTLERVSPSTSDLACKLWVWQVEGDGQSFSINFNITKDTRFAELLALESEAGVPALVGPSAFKIPFLIRQKIISSLDPPCRRGADWRTLAQKLHLDSHLSFFASKPSPTAMILNLWEARHFPNGNLSQLAAAVAGLGQPDAGLFTVSEAEC.

The signal sequence occupies residues 1 to 25; sequence MAVRPGLWPALLGIVLAAWLRGSGA. At 26 to 306 the chain is on the extracellular side; sequence QQSATVANPV…ASGPEDVALY (281 aa). In terms of domain architecture, Ig-like spans 44–141; sequence PHFLVEPEDV…SGTTKSQKAY (98 aa). Intrachain disulfides connect Cys-65–Cys-126, Cys-77–Cys-124, and Cys-170–Cys-221. N-linked (GlcNAc...) asparagine glycosylation is found at Asn-107 and Asn-218. The Ig-like C2-type domain occupies 155-234; it reads PLAKEVSLEQ…NIVARRRSAS (80 aa). In terms of domain architecture, TSP type-1 spans 242 to 294; that stretch reads DGSWSPWSKWSACGLDCTHWRSRECSDPAPRNGGEECQGTDLDTRNCTSDLCV. C-linked (Man) tryptophan glycosylation is found at Trp-245, Trp-248, and Trp-251. Disulfide bonds link Cys-254-Cys-288, Cys-258-Cys-293, and Cys-266-Cys-278. Asn-287 is a glycosylation site (N-linked (GlcNAc...) asparagine). A helical transmembrane segment spans residues 307-327; that stretch reads VGLIAVAVCLVLLLLVLILVY. At 328–842 the chain is on the cytoplasmic side; that stretch reads CRKKEGLDSD…GLFTVSEAEC (515 aa). The 144-residue stretch at 441–584 folds into the ZU5 domain; sequence NMTYGTFNFL…LGRFALVGEA (144 aa). The interaction with DCC stretch occupies residues 605-623; it reads SLEYNIRVYCLHDTHDALK. The Death domain occupies 761–841; that stretch reads QKIISSLDPP…AGLFTVSEAE (81 aa).

This sequence belongs to the unc-5 family. As to quaternary structure, homodimer and homooligomer. Interacts with the cytoplasmic part of DCC. Interacts with MAGED1. Interacts with PRKCABP, possibly mediating some interaction with PKC. Interacts (via extracellular domain) with FLRT2 (via extracellular domain). Interacts (via extracellular domain) with FLRT3 (via extracellular domain). Post-translationally, phosphorylated on cytoplasmic tyrosine residues. Phosphorylated by PKC in vitro. Proteolytically cleaved by caspases during apoptosis. The cleavage does not take place when the receptor is associated with netrin ligand. Its cleavage by caspases is required to induce apoptosis. In terms of processing, the two extracellular TSRs of UNC5A contain WxxWxxWxxC motifs that can be C-mannosylated on all tryptophans. DPY19L1 preferentially mannosylates the first two tryptophans and DPY19L3 prefers the third. C-mannosylation by DPY19L1 is required for transport of UNC5A from the endoplasmic reticulum to the cell surface.

Its subcellular location is the cell membrane. It is found in the membrane raft. The protein localises to the cell projection. It localises to the neuron projection. In terms of biological role, receptor for netrin required for axon guidance. Functions in the netrin signaling pathway and promotes neurite outgrowth in response to NTN1. Mediates axon repulsion of neuronal growth cones in the developing nervous system in response to netrin. Axon repulsion in growth cones may be mediated by its association with DCC that may trigger signaling for repulsion. It also acts as a dependence receptor required for apoptosis induction when not associated with netrin ligand. The polypeptide is Netrin receptor UNC5A (UNC5A) (Homo sapiens (Human)).